The sequence spans 262 residues: Phycoerythrobilin:ferredoxin oxidoreductase (262 aa).

Belongs to the HY2 family.

It catalyses the reaction (3Z)-phycoerythrobilin + oxidized 2[4Fe-4S]-[ferredoxin] = 15,16-dihydrobiliverdin + reduced 2[4Fe-4S]-[ferredoxin] + 2 H(+). In terms of biological role, catalyzes the two-electron reduction of the C2 and C3(1) diene system of 15,16-dihydrobiliverdin. The chain is Phycoerythrobilin:ferredoxin oxidoreductase (pebB) from Parasynechococcus marenigrum (strain WH8102).